The primary structure comprises 1073 residues: Carbamoyl phosphate synthase large chain (1073 aa).

Residues 1–402 are carboxyphosphate synthetic domain; the sequence is MPRRIDVRKV…ALQKAIRMLD (402 aa). Positions 129, 169, 175, 176, 208, 210, 215, 241, 242, 243, 284, and 299 each coordinate ATP. The 196-residue stretch at 133–328 folds into the ATP-grasp 1 domain; sequence RETMMKAGLP…LAYIAAKLAL (196 aa). 3 residues coordinate Mg(2+): Q284, E299, and N301. Residues Q284, E299, and N301 each contribute to the Mn(2+) site. Residues 403–555 form an oligomerization domain region; sequence IGEPGVVAGP…MSYNAYEDDE (153 aa). A carbamoyl phosphate synthetic domain region spans residues 556–944; the sequence is PITTGRPRLI…LKSWLSVQGN (389 aa). An ATP-grasp 2 domain is found at 681 to 871; that stretch reads SQLLEELGIK…LMRAAAEAAL (191 aa). Residues R717, K756, L758, E763, G787, V788, H789, S790, Q830, and E842 each contribute to the ATP site. Mg(2+) contacts are provided by Q830, E842, and N844. Mn(2+) contacts are provided by Q830, E842, and N844. An MGS-like domain is found at 944-1073; the sequence is NRIPPAGSIV…EYWGPNVEPF (130 aa). The segment at 945-1073 is allosteric domain; the sequence is RIPPAGSIVL…EYWGPNVEPF (129 aa).

Belongs to the CarB family. In terms of assembly, composed of two chains; the small (or glutamine) chain promotes the hydrolysis of glutamine to ammonia, which is used by the large (or ammonia) chain to synthesize carbamoyl phosphate. Tetramer of heterodimers (alpha,beta)4. The cofactor is Mg(2+). It depends on Mn(2+) as a cofactor.

It catalyses the reaction hydrogencarbonate + L-glutamine + 2 ATP + H2O = carbamoyl phosphate + L-glutamate + 2 ADP + phosphate + 2 H(+). The catalysed reaction is hydrogencarbonate + NH4(+) + 2 ATP = carbamoyl phosphate + 2 ADP + phosphate + 2 H(+). It participates in amino-acid biosynthesis; L-arginine biosynthesis; carbamoyl phosphate from bicarbonate: step 1/1. The protein operates within pyrimidine metabolism; UMP biosynthesis via de novo pathway; (S)-dihydroorotate from bicarbonate: step 1/3. Functionally, large subunit of the glutamine-dependent carbamoyl phosphate synthetase (CPSase). CPSase catalyzes the formation of carbamoyl phosphate from the ammonia moiety of glutamine, carbonate, and phosphate donated by ATP, constituting the first step of 2 biosynthetic pathways, one leading to arginine and/or urea and the other to pyrimidine nucleotides. The large subunit (synthetase) binds the substrates ammonia (free or transferred from glutamine from the small subunit), hydrogencarbonate and ATP and carries out an ATP-coupled ligase reaction, activating hydrogencarbonate by forming carboxy phosphate which reacts with ammonia to form carbamoyl phosphate. This Hyperthermus butylicus (strain DSM 5456 / JCM 9403 / PLM1-5) protein is Carbamoyl phosphate synthase large chain.